The following is a 1207-amino-acid chain: DNA-directed RNA polymerase subunit beta' (1207 aa).

Zn(2+) contacts are provided by C60, C62, C75, and C78. Residues D449, D451, and D453 each contribute to the Mg(2+) site. Residues C822, C896, C903, and C906 each coordinate Zn(2+).

This sequence belongs to the RNA polymerase beta' chain family. As to quaternary structure, the RNAP catalytic core consists of 2 alpha, 1 beta, 1 beta' and 1 omega subunit. When a sigma factor is associated with the core the holoenzyme is formed, which can initiate transcription. The cofactor is Mg(2+). Zn(2+) serves as cofactor.

It carries out the reaction RNA(n) + a ribonucleoside 5'-triphosphate = RNA(n+1) + diphosphate. Functionally, DNA-dependent RNA polymerase catalyzes the transcription of DNA into RNA using the four ribonucleoside triphosphates as substrates. This is DNA-directed RNA polymerase subunit beta' from Staphylococcus aureus (strain MRSA252).